The sequence spans 360 residues: Serine/threonine-protein kinase SAPK4 (360 aa).

The Protein kinase domain maps to 4–260; the sequence is YEAVRDIGSG…MKEIKSHPWF (257 aa). Residues 10–18 and Lys33 contribute to the ATP site; that span reads IGSGNFGVA. Asp123 acts as the Proton acceptor in catalysis. Residues 303–360 are disordered; sequence TMPKSSRTGYWSDAGSDEEEKEEEERPEENEEEEEDEYDKRVKEVHASGELRMSSLRI. The span at 317–339 shows a compositional bias: acidic residues; the sequence is GSDEEEKEEEERPEENEEEEEDE. Residues 340 to 351 show a composition bias toward basic and acidic residues; it reads YDKRVKEVHASG.

It belongs to the protein kinase superfamily. Ser/Thr protein kinase family. May be phosphorylated. In terms of tissue distribution, expressed in leaf blades, leaf sheaths and roots. Expressed in shoots and roots of young seedlings.

The enzyme catalyses L-seryl-[protein] + ATP = O-phospho-L-seryl-[protein] + ADP + H(+). The catalysed reaction is L-threonyl-[protein] + ATP = O-phospho-L-threonyl-[protein] + ADP + H(+). Activated by hyperosmotic stress. Its function is as follows. May play a role in signal transduction of hyperosmotic response. This chain is Serine/threonine-protein kinase SAPK4 (SAPK4), found in Oryza sativa subsp. japonica (Rice).